Reading from the N-terminus, the 380-residue chain is MKASADASSPQETTPPLSLLLFVANRPGDEEETAAIQAHIQQLPSNFSFELKVVPIGEQPYLLEEYKLVATPALIKVRPEPRQTLAGRKLLQKVDYWWPRWQREVALGLQADMQKSAAEQSDCSMELSRLKDELFQLRQERDRLAEQLQFKDRIISLLAHELRNPLTAGGIALETLESNLQEESSQQLPIEDIQRLFHHARSQTQTMGQLITDLLLAARGPQDKLQIMARQLDLRQLCQETVEDVRLNFERKKQHFTTDIPLDLPLVYGDGDRIRQVLVNLLDNACKYTPEGGKIHLSAFHRMTQKVQVTVSDTGPGIPIEQQEKIFGETVRLDRDRAIEGYGIGLALCRQIIRMHYGQIWVDSQPGKGSCFHFTLPVYS.

The interval 20 to 101 (LLFVANRPGD…QKVDYWWPRW (82 aa)) is kaiB-like domain, interacts with KaiC. The region spanning 157–380 (LLAHELRNPL…CFHFTLPVYS (224 aa)) is the Histidine kinase domain. H160 bears the Phosphohistidine; by autocatalysis mark.

Homotrimer with a small amount of possible homohexamer; a protein fragment of 109-380 is also a homotrimer. Interacts with KaiC, probably as 1 SasA trimer:1 KaiC homohexamer; unphosphorylated SasA has the highest affinity. Homodimer. Binds to the B-loop in the CI domain of KaiC; SasA and KaiB(fs) compete to bind to the CI domain. Binds preferentially to doubly phosphorylated KaiC. Post-translationally, autophosphorylates, probably on His-160.

It carries out the reaction ATP + protein L-histidine = ADP + protein N-phospho-L-histidine.. Functionally, member of the two-component regulatory system SasA/RpaA involved in genome-wide circadian gene expression. One of several clock output pathways. Participates in the Kai clock protein complex, the main circadian regulator in cyanobacteria, via its interaction with KaiC. KaiC enhances the autophosphorylation activity of SasA, which then transfers its phosphate group to RpaA to activate it. In addition to its output function, recruits fold-shifted KaiB (KaiB(fs)) to KaiC to cooperatively form the KaiB(6):KaiC(6) complex (independent of SasA kinase activity). Required for robustness of the circadian rhythm of gene expression and is involved in clock output, also required for adaptation to light/dark cycles. The chain is Adaptive-response sensory kinase SasA from Thermosynechococcus vestitus (strain NIES-2133 / IAM M-273 / BP-1).